The primary structure comprises 277 residues: MALKKYKPITNGRRNMTTLDFAEITKTTPEKSLLQPLPKRAGRNNQGKLTVRHHGGGHKRQYRVIDFKRNKDGIIAKVDSIQYDPNRSANIALLVYADGEKRYIIAPKGLQVGQTVESGAEADIKVGNALPLQNIPVGTVIHNIELKPGKGGQLARSAGASSQVLGKEGKYVLIRLRSGEVRMILSTCRATIGQVGNLQHELVNVGKAGRSRWKGVRPTVRGSVMNPNDHPHGGGEGRAPIGRPSPMSPWGKPTLGKKTRRGKKSSDKLIVRGRKKK.

Positions 211-277 (SRWKGVRPTV…KLIVRGRKKK (67 aa)) are disordered.

This sequence belongs to the universal ribosomal protein uL2 family. As to quaternary structure, part of the 50S ribosomal subunit. Forms a bridge to the 30S subunit in the 70S ribosome.

Its function is as follows. One of the primary rRNA binding proteins. Required for association of the 30S and 50S subunits to form the 70S ribosome, for tRNA binding and peptide bond formation. It has been suggested to have peptidyltransferase activity; this is somewhat controversial. Makes several contacts with the 16S rRNA in the 70S ribosome. The protein is Large ribosomal subunit protein uL2 of Staphylococcus epidermidis (strain ATCC 35984 / DSM 28319 / BCRC 17069 / CCUG 31568 / BM 3577 / RP62A).